We begin with the raw amino-acid sequence, 132 residues long: uncharacterized protein (132 aa).

3 helical membrane-spanning segments follow: residues 18–38 (MLFIFMPFAITSFFAFLFIGI), 50–70 (IIYFFIFAFGFVLPDLPGVFI), and 71–91 (VVPLWAVTIIHGFKVRPLYLI).

Its subcellular location is the cell membrane. This is an uncharacterized protein from Bacillus subtilis (strain 168).